Reading from the N-terminus, the 159-residue chain is NADH-quinone oxidoreductase subunit I (159 aa).

2 4Fe-4S ferredoxin-type domains span residues 51–80 (RRYE…IEAD) and 90–119 (TRYD…EGPN). The [4Fe-4S] cluster site is built by Cys60, Cys63, Cys66, Cys70, Cys99, Cys102, Cys105, and Cys109.

This sequence belongs to the complex I 23 kDa subunit family. In terms of assembly, NDH-1 is composed of 14 different subunits. Subunits NuoA, H, J, K, L, M, N constitute the membrane sector of the complex. It depends on [4Fe-4S] cluster as a cofactor.

Its subcellular location is the cell inner membrane. The catalysed reaction is a quinone + NADH + 5 H(+)(in) = a quinol + NAD(+) + 4 H(+)(out). Its function is as follows. NDH-1 shuttles electrons from NADH, via FMN and iron-sulfur (Fe-S) centers, to quinones in the respiratory chain. The immediate electron acceptor for the enzyme in this species is believed to be ubiquinone. Couples the redox reaction to proton translocation (for every two electrons transferred, four hydrogen ions are translocated across the cytoplasmic membrane), and thus conserves the redox energy in a proton gradient. The sequence is that of NADH-quinone oxidoreductase subunit I from Rickettsia bellii (strain OSU 85-389).